A 194-amino-acid polypeptide reads, in one-letter code: MSSKEQNTPNEQASDEIETEQAKNQGADTAAEAADQRDERIAQLEAQLAESQGGVRDAQLRAQAEIENIRRRAELDVEKAHKFALEKFSNELLPVIDSLERALEVADKSNPELAAMIEGIDLTMKSLLGAVRKFGVEVVGDTNVPFNPEVHQAMSMMESEEVEPNHVMMVMQRGYTLNGRLLRPAMVAVAKSKG.

Positions 1–12 are enriched in polar residues; it reads MSSKEQNTPNEQ. Residues 1 to 39 form a disordered region; sequence MSSKEQNTPNEQASDEIETEQAKNQGADTAAEAADQRDE.

It belongs to the GrpE family. Homodimer.

It localises to the cytoplasm. Functionally, participates actively in the response to hyperosmotic and heat shock by preventing the aggregation of stress-denatured proteins, in association with DnaK and GrpE. It is the nucleotide exchange factor for DnaK and may function as a thermosensor. Unfolded proteins bind initially to DnaJ; upon interaction with the DnaJ-bound protein, DnaK hydrolyzes its bound ATP, resulting in the formation of a stable complex. GrpE releases ADP from DnaK; ATP binding to DnaK triggers the release of the substrate protein, thus completing the reaction cycle. Several rounds of ATP-dependent interactions between DnaJ, DnaK and GrpE are required for fully efficient folding. This chain is Protein GrpE, found in Erwinia tasmaniensis (strain DSM 17950 / CFBP 7177 / CIP 109463 / NCPPB 4357 / Et1/99).